We begin with the raw amino-acid sequence, 239 residues long: Prolyl hydroxylase EGLN3 (239 aa).

Residues 62–73 form a beta(2)beta(3) 'finger-like' loop region; the sequence is AGPRAGVSKRHL. Residues 88–104 form a required for interaction with ADRB2 region; the sequence is CEAINFLLSLIDRLVLY. Residues 116-214 form the Fe2OG dioxygenase domain; sequence ERSKAMVACY…RYAMTVWYFD (99 aa). Fe cation-binding residues include histidine 135, aspartate 137, and histidine 196. Arginine 205 is a 2-oxoglutarate binding site.

Interacts with ADRB2; the interaction hydroxylates ADRB2 facilitating its ubiquitination by the VHL-E3 ligase complex. Interacts with PKM; the interaction hydroxylates PKM in hypoxia. Interacts with WDR83; the interaction leads to almost complete elimination of HIF-mediated reporter activity. Interacts with BCL2 (via its BH4 domain); the interaction disrupts the BAX-BCL4 complex inhibiting the anti-apoptotic activity of BCL2. Interacts with LIMD1, WTIP and AJUBA. Fe(2+) is required as a cofactor. It depends on L-ascorbate as a cofactor. In terms of processing, ubiquitinated by SIAH1 and/or SIAH2 in response to the unfolded protein response (UPR), leading to its degradation. Highly expressed in cardiac and smooth muscle. Also high expression in brain, skeletal muscle and kidney. Low levels in lung.

The protein localises to the nucleus. Its subcellular location is the cytoplasm. The enzyme catalyses L-prolyl-[protein] + 2-oxoglutarate + O2 = trans-4-hydroxy-L-prolyl-[protein] + succinate + CO2. It carries out the reaction L-prolyl-[hypoxia-inducible factor alpha subunit] + 2-oxoglutarate + O2 = trans-4-hydroxy-L-prolyl-[hypoxia-inducible factor alpha subunit] + succinate + CO2. Functionally, prolyl hydroxylase that mediates hydroxylation of proline residues in target proteins, such as PKM, TELO2, ATF4 and HIF1A. Target proteins are preferentially recognized via a LXXLAP motif. Cellular oxygen sensor that catalyzes, under normoxic conditions, the post-translational formation of 4-hydroxyproline in hypoxia-inducible factor (HIF) alpha proteins. Hydroxylates a specific proline found in each of the oxygen-dependent degradation (ODD) domains (N-terminal, NODD, and C-terminal, CODD) of HIF1A. Also hydroxylates HIF2A. Has a preference for the CODD site for both HIF1A and HIF2A. Hydroxylation on the NODD site by EGLN3 appears to require prior hydroxylation on the CODD site. Hydroxylated HIFs are then targeted for proteasomal degradation via the von Hippel-Lindau ubiquitination complex. Under hypoxic conditions, the hydroxylation reaction is attenuated allowing HIFs to escape degradation resulting in their translocation to the nucleus, heterodimerization with HIF1B, and increased expression of hypoxy-inducible genes. ELGN3 is the most important isozyme in limiting physiological activation of HIFs (particularly HIF2A) in hypoxia. Also hydroxylates PKM in hypoxia, limiting glycolysis. Under normoxia, hydroxylates and regulates the stability of ADRB2. Regulator of cardiomyocyte and neuronal apoptosis. In cardiomyocytes, inhibits the anti-apoptotic effect of BCL2 by disrupting the BAX-BCL2 complex. In neurons, has a NGF-induced proapoptotic effect, probably through regulating CASP3 activity. Also essential for hypoxic regulation of neutrophilic inflammation. Plays a crucial role in DNA damage response (DDR) by hydroxylating TELO2, promoting its interaction with ATR which is required for activation of the ATR/CHK1/p53 pathway. Also mediates hydroxylation of ATF4, leading to decreased protein stability of ATF4. In Mus musculus (Mouse), this protein is Prolyl hydroxylase EGLN3.